The following is a 203-amino-acid chain: Holliday junction branch migration complex subunit RuvA (203 aa).

The tract at residues 1–64 is domain I; that stretch reads MIGRLRGTLA…EDAQLLYGFI (64 aa). The segment at 65-143 is domain II; it reads GKRDRDFFRE…AWEVVPSMFA (79 aa). The flexible linker stretch occupies residues 144 to 154; it reads LVPNQPDMPAG. The interval 155-203 is domain III; sequence QVASAESDAVSALISLGYKPQEASKAVSAIKDKNLSSEDMIRRALKGMI.

Belongs to the RuvA family. As to quaternary structure, homotetramer. Forms an RuvA(8)-RuvB(12)-Holliday junction (HJ) complex. HJ DNA is sandwiched between 2 RuvA tetramers; dsDNA enters through RuvA and exits via RuvB. An RuvB hexamer assembles on each DNA strand where it exits the tetramer. Each RuvB hexamer is contacted by two RuvA subunits (via domain III) on 2 adjacent RuvB subunits; this complex drives branch migration. In the full resolvosome a probable DNA-RuvA(4)-RuvB(12)-RuvC(2) complex forms which resolves the HJ.

It localises to the cytoplasm. Functionally, the RuvA-RuvB-RuvC complex processes Holliday junction (HJ) DNA during genetic recombination and DNA repair, while the RuvA-RuvB complex plays an important role in the rescue of blocked DNA replication forks via replication fork reversal (RFR). RuvA specifically binds to HJ cruciform DNA, conferring on it an open structure. The RuvB hexamer acts as an ATP-dependent pump, pulling dsDNA into and through the RuvAB complex. HJ branch migration allows RuvC to scan DNA until it finds its consensus sequence, where it cleaves and resolves the cruciform DNA. The sequence is that of Holliday junction branch migration complex subunit RuvA from Pseudomonas fluorescens (strain SBW25).